A 598-amino-acid polypeptide reads, in one-letter code: Pantothenate kinase 1 (598 aa).

Positions 32–161 are disordered; that stretch reads ARPGDQGKAG…SPGAPVGTSA (130 aa). Positions 38–49 are enriched in gly residues; it reads GKAGGGSPGWGC. Ser215 carries the phosphoserine modification. The short motif at 218-235 is the Nucleolar localization signal element; sequence KKCRLRRRMDSGRKNRPP. Glu363 functions as the Proton acceptor in the catalytic mechanism. Acetyl-CoA-binding residues include Ser417, Ser420, and Arg432.

It belongs to the type II pantothenate kinase family. In terms of assembly, homodimer. In terms of tissue distribution, expressed at high levels in brain, heart, kidney, liver, skeletal muscle and testis. Detected at much lower levels in kidney, liver, brain and testis and not detected in heart or skeletal muscle.

The protein localises to the cytoplasm. It is found in the nucleus. It localises to the nucleolus. Its subcellular location is the cytosol. The protein resides in the cytoplasmic vesicle. The protein localises to the clathrin-coated vesicle. It is found in the recycling endosome. The enzyme catalyses (R)-pantothenate + ATP = (R)-4'-phosphopantothenate + ADP + H(+). The protein operates within cofactor biosynthesis; coenzyme A biosynthesis; CoA from (R)-pantothenate: step 1/5. Its activity is regulated as follows. Regulated by feedback inhibition by CoA and its thioesters. Functionally, catalyzes the phosphorylation of pantothenate to generate 4'-phosphopantothenate in the first and rate-determining step of coenzyme A (CoA) synthesis. The chain is Pantothenate kinase 1 (PANK1) from Homo sapiens (Human).